The sequence spans 530 residues: Autoinducer-2 kinase (530 aa).

Belongs to the FGGY kinase family.

It localises to the cytoplasm. The enzyme catalyses (S)-4,5-dihydroxypentane-2,3-dione + ATP = (2S)-2-hydroxy-3,4-dioxopentyl phosphate + ADP + H(+). Catalyzes the phosphorylation of autoinducer-2 (AI-2) to phospho-AI-2, which subsequently inactivates the transcriptional regulator LsrR and leads to the transcription of the lsr operon. Phosphorylates the ring-open form of (S)-4,5-dihydroxypentane-2,3-dione (DPD), which is the precursor to all AI-2 signaling molecules, at the C5 position. This Escherichia coli (strain SMS-3-5 / SECEC) protein is Autoinducer-2 kinase.